The primary structure comprises 536 residues: Heparanase (536 aa).

Positions 1-28 are cleaved as a signal peptide; sequence MLRPLLLLWLWGRLGALTQGTPAGTAPT. Heparan sulfate group is bound by residues 55-57 and threonine 90; that span reads DAS. Residues 103–150 constitute a propeptide, linker peptide; it reads PTSEERSYWQSQDNNDICGSERVSADVLRKLQMEWPFQELLLLREQYQ. Cysteine 120 and cysteine 172 are oxidised to a cystine. 151 to 155 is a binding site for heparan sulfate group; that stretch reads REFKN. 3 N-linked (GlcNAc...) asparagine glycosylation sites follow: asparagine 155, asparagine 193, and asparagine 210. Catalysis depends on glutamate 218, which acts as the Proton donor. Residues 263–273, histidine 289, and arginine 296 each bind heparan sulfate group; that span reads QPRGKTVKLLR. Residues 281 to 410 are required for heterodimerization with the heparanase 8 kDa subunit; sequence EVIDSLTWHH…LLFKKLVGPK (130 aa). Glutamate 336 serves as the catalytic Nucleophile. Residues 341 to 343 and 382 to 384 each bind heparan sulfate group; these read YGG and GNY. An intrachain disulfide couples cysteine 430 to cysteine 535. N-linked (GlcNAc...) asparagine glycosylation occurs at asparagine 452. The required for transferring proheparanase to the Golgi apparatus, secretion and subsequent enzyme activity and for enhancement of PKB/AKT1 phosphorylation stretch occupies residues 520 to 536; the sequence is FSYGFFVIRNAKIAACI.

The protein belongs to the glycosyl hydrolase 79 family. Heterodimer; heterodimer formation between the 8 kDa and the 50 kDa subunits is required for enzyme activity. Interacts with TF; the interaction, inhibited by heparin, enhances the generation of activated factor X and activates coagulation. Interacts with HRG; the interaction is enhanced at acidic pH, partially inhibits binding of HPSE to cell surface receptors and modulates its enzymatic activity. Interacts with SDC1; the interaction enhances the shedding of SDC1. Interacts with HPSE2. Post-translationally, proteolytically processed. The cleavage of the 65 kDa form leads to the generation of a linker peptide, and the 8 kDa and 50 kDa products. The active form, the 8/50 kDa heterodimer, is resistant to degradation. Complete removal of the linker peptide appears to be a prerequisite to the complete activation of the enzyme. N-glycosylated. Glycosylation of the 50 kDa subunit appears to be essential for its solubility.

It is found in the lysosome membrane. The protein resides in the secreted. The protein localises to the nucleus. It carries out the reaction endohydrolysis of (1-&gt;4)-beta-D-glycosidic bonds of heparan sulfate chains in heparan sulfate proteoglycan.. With respect to regulation, inhibited by laminarin sulfate and, to a lower extent, by heparin and sulfamin. Activated by calcium and magnesium. Inhibited by EDTA. Functionally, endoglycosidase that cleaves heparan sulfate proteoglycans (HSPGs) into heparan sulfate side chains and core proteoglycans. Participates in extracellular matrix (ECM) degradation and remodeling. Selectively cleaves the linkage between a glucuronic acid unit and an N-sulfo glucosamine unit carrying either a 3-O-sulfo or a 6-O-sulfo group. Can also cleave the linkage between a glucuronic acid unit and an N-sulfo glucosamine unit carrying a 2-O-sulfo group, but not linkages between a glucuronic acid unit and a 2-O-sulfated iduronic acid moiety. It is essentially inactive at neutral pH but becomes active under acidic conditions such as during tumor invasion and in inflammatory processes. Facilitates cell migration associated with metastasis, wound healing and inflammation. Enhances shedding of syndecans, and increases endothelial invasion and angiogenesis in myelomas. Acts as a procoagulant by increasing the generation of activation factor X in the presence of tissue factor and activation factor VII. Increases cell adhesion to the extracellular matrix (ECM), independent of its enzymatic activity. Induces AKT1/PKB phosphorylation via lipid rafts increasing cell mobility and invasion. Heparin increases this AKT1/PKB activation. Regulates osteogenesis. Enhances angiogenesis through up-regulation of SRC-mediated activation of VEGF. Implicated in hair follicle inner root sheath differentiation and hair homeostasis. The polypeptide is Heparanase (Hpse) (Rattus norvegicus (Rat)).